Reading from the N-terminus, the 203-residue chain is Elongation factor Ts (203 aa).

The segment at 80-83 (TDFV) is involved in Mg(2+) ion dislocation from EF-Tu.

It belongs to the EF-Ts family.

The protein localises to the cytoplasm. Associates with the EF-Tu.GDP complex and induces the exchange of GDP to GTP. It remains bound to the aminoacyl-tRNA.EF-Tu.GTP complex up to the GTP hydrolysis stage on the ribosome. The protein is Elongation factor Ts of Moorella thermoacetica (strain ATCC 39073 / JCM 9320).